A 247-amino-acid chain; its full sequence is 2,3-bisphosphoglycerate-dependent phosphoglycerate mutase (247 aa).

Substrate is bound by residues 8–15 (RHGESTWN), 21–22 (TG), R60, 87–90 (ERHY), K98, 114–115 (RR), and 183–184 (GN). The Tele-phosphohistidine intermediate role is filled by H9. E87 functions as the Proton donor/acceptor in the catalytic mechanism.

The protein belongs to the phosphoglycerate mutase family. BPG-dependent PGAM subfamily. As to quaternary structure, homodimer.

It carries out the reaction (2R)-2-phosphoglycerate = (2R)-3-phosphoglycerate. It functions in the pathway carbohydrate degradation; glycolysis; pyruvate from D-glyceraldehyde 3-phosphate: step 3/5. Catalyzes the interconversion of 2-phosphoglycerate and 3-phosphoglycerate. This is 2,3-bisphosphoglycerate-dependent phosphoglycerate mutase from Acidovorax ebreus (strain TPSY) (Diaphorobacter sp. (strain TPSY)).